We begin with the raw amino-acid sequence, 261 residues long: Bidirectional sugar transporter SWEET1b (261 aa).

The Extracellular segment spans residues 1 to 6; that stretch reads MEDLAK. The helical transmembrane segment at 7 to 27 threads the bilayer; it reads FLFGVSGNVIALFLFLSPVPT. Positions 7–95 constitute a MtN3/slv 1 domain; that stretch reads FLFGVSGNVI…VVFLVFASTH (89 aa). Over 28-42 the chain is Cytoplasmic; that stretch reads FWRIIRRKSTEDFSG. A helical transmembrane segment spans residues 43–63; the sequence is VPYNMTLINCLLSAWYGLPFV. The Extracellular segment spans residues 64 to 71; that stretch reads SPNNILVS. Residues 72 to 92 form a helical membrane-spanning segment; the sequence is TINGAGAVIETAYVVVFLVFA. Residues 93 to 101 lie on the Cytoplasmic side of the membrane; that stretch reads STHKTRLRT. A helical membrane pass occupies residues 102 to 122; that stretch reads LGLAAAVASVFAAVALVSLLA. Over 123–129 the chain is Extracellular; it reads LHGQHRK. The helical transmembrane segment at 130 to 150 threads the bilayer; the sequence is LLCGVAATVCSICMYASPLSI. In terms of domain architecture, MtN3/slv 2 spans 133 to 215; the sequence is GVAATVCSIC…VLYAIYRNNK (83 aa). Residues 151–164 lie on the Cytoplasmic side of the membrane; it reads MRLVIKTKSVEYMP. A helical transmembrane segment spans residues 165–185; the sequence is FLLSLAVFLCGTSWFIYGLLG. The Extracellular segment spans residues 186–189; sequence RDPF. The helical transmembrane segment at 190 to 210 threads the bilayer; that stretch reads VTIPNGCGSFLGAVQLVLYAI. Residues 211 to 261 lie on the Cytoplasmic side of the membrane; it reads YRNNKGAGGGSGGKQAGDDDVEMAEGRNNKVADGGAAEDDSTAGGKAGTEV. A disordered region spans residues 218-261; sequence GGGSGGKQAGDDDVEMAEGRNNKVADGGAAEDDSTAGGKAGTEV.

Belongs to the SWEET sugar transporter family. Forms homodimers.

The protein localises to the cell membrane. The enzyme catalyses D-glucose(out) = D-glucose(in). It carries out the reaction D-galactose(in) = D-galactose(out). Mediates transport of sugars across the plasma membrane. Can transport glucose and galactose, but not fructose, mannose and sucrose. The protein is Bidirectional sugar transporter SWEET1b (SWEET1B) of Oryza sativa subsp. indica (Rice).